Consider the following 172-residue polypeptide: DNA-directed RNA polymerase II subunit RPB7 (172 aa).

It belongs to the eukaryotic RPB7/RPC8 RNA polymerase subunit family. Component of the RNA polymerase II (Pol II) core complex consisting of 12 subunits: a ten-subunit catalytic core composed of POLR2A/RPB1, POLR2B/RPB2, POLR2C/RPB3, POLR2I/RPB9, POLR2J/RPB11, POLR2E/RPABC1, POLR2F/RPABC2, POLR2H/RPABC3, POLR2K/RPABC4 and POLR2L/RPABC5 and a mobile stalk composed of two subunits POLR2D/RPB4 and POLR2G/RPB7, protruding from the core and functioning primarily in transcription initiation. Part of Pol II(G) complex, in which Pol II core associates with an additional subunit POLR2M; unlike conventional Pol II, Pol II(G) functions as a transcriptional repressor. Part of TBP-based Pol II pre-initiation complex (PIC), in which Pol II core assembles with general transcription factors and other specific initiation factors including GTF2E1, GTF2E2, GTF2F1, GTF2F2, TCEA1, ERCC2, ERCC3, GTF2H2, GTF2H3, GTF2H4, GTF2H5, GTF2A1, GTF2A2, GTF2B and TBP; this large multi-subunit PIC complex mediates DNA unwinding and targets Pol II core to the transcription start site where the first phosphodiester bond forms.

The protein localises to the nucleus. In terms of biological role, core component of RNA polymerase II (Pol II), a DNA-dependent RNA polymerase which synthesizes mRNA precursors and many functional non-coding RNAs using the four ribonucleoside triphosphates as substrates. Pol II is the central component of the basal RNA polymerase II transcription machinery. It is composed of mobile elements that move relative to each other. POLR2G/RPB7 is part of a subcomplex with POLR2D/RPB4 that binds to a pocket formed by POLR2A/RPB1, POLR2B/RPB2 and POLR2F/RPABC2 at the base of the clamp element. The POLR2D/RPB4-POLR2G/RPB7 subcomplex seems to lock the clamp via POLR2G/RPB7 in the closed conformation thus preventing double-stranded DNA to enter the active site cleft. The POLR2D/RPB4-POLR2G/RPB7 subcomplex binds single-stranded DNA and RNA. This Bos taurus (Bovine) protein is DNA-directed RNA polymerase II subunit RPB7 (POLR2G).